The chain runs to 499 residues: Serine carboxypeptidase-like 34 (499 aa).

The N-terminal stretch at 1-25 is a signal peptide; that stretch reads MGSHSVEFSVLVLFLVSFLLGSTSA. N-linked (GlcNAc...) asparagine glycans are attached at residues Asn-73, Asn-124, and Asn-158. 3 disulfides stabilise this stretch: Cys-106/Cys-383, Cys-269/Cys-280, and Cys-304/Cys-351. Ser-200 is an active-site residue. N-linked (GlcNAc...) asparagine glycosylation is found at Asn-310, Asn-372, and Asn-375. Active-site residues include Asp-419 and His-471.

It belongs to the peptidase S10 family. In terms of tissue distribution, ubiquitous.

The protein resides in the secreted. In terms of biological role, probable carboxypeptidase. This is Serine carboxypeptidase-like 34 (SCPL34) from Arabidopsis thaliana (Mouse-ear cress).